Consider the following 163-residue polypeptide: Phosphopantetheine adenylyltransferase (163 aa).

A substrate-binding site is contributed by T10. ATP contacts are provided by residues 10–11 (TF) and H18. Substrate contacts are provided by K42, L74, and R88. Residues 89 to 91 (GLR), E99, and 124 to 130 (NSFISST) contribute to the ATP site.

This sequence belongs to the bacterial CoaD family. As to quaternary structure, homohexamer. Requires Mg(2+) as cofactor.

It localises to the cytoplasm. The enzyme catalyses (R)-4'-phosphopantetheine + ATP + H(+) = 3'-dephospho-CoA + diphosphate. The protein operates within cofactor biosynthesis; coenzyme A biosynthesis; CoA from (R)-pantothenate: step 4/5. Reversibly transfers an adenylyl group from ATP to 4'-phosphopantetheine, yielding dephospho-CoA (dPCoA) and pyrophosphate. The protein is Phosphopantetheine adenylyltransferase of Shewanella baltica (strain OS223).